We begin with the raw amino-acid sequence, 246 residues long: Pyrroloquinoline-quinone synthase (246 aa).

The protein belongs to the PqqC family.

The catalysed reaction is 6-(2-amino-2-carboxyethyl)-7,8-dioxo-1,2,3,4,7,8-hexahydroquinoline-2,4-dicarboxylate + 3 O2 = pyrroloquinoline quinone + 2 H2O2 + 2 H2O + H(+). It functions in the pathway cofactor biosynthesis; pyrroloquinoline quinone biosynthesis. In terms of biological role, ring cyclization and eight-electron oxidation of 3a-(2-amino-2-carboxyethyl)-4,5-dioxo-4,5,6,7,8,9-hexahydroquinoline-7,9-dicarboxylic-acid to PQQ. This chain is Pyrroloquinoline-quinone synthase, found in Acidiphilium cryptum (strain JF-5).